Here is a 612-residue protein sequence, read N- to C-terminus: Coagulation factor XII (612 aa).

The N-terminal stretch at 1–19 (MRALLLLGALLVSLESTVS) is a signal peptide. Positions 42 to 90 (VTGEPCHFPFQYHRQLHHKCIHRGRPGPRPWCATTPNFEKDQRWAYCLE) constitute a Fibronectin type-II domain. 20 disulfides stabilise this stretch: C47/C73, C61/C88, C98/C110, C104/C119, C121/C130, C135/C163, C161/C170, C178/C189, C183/C198, C200/C209, C217/C306, C240/C288, C268/C301, C355/C482, C393/C409, C401/C471, C432/C435, C498/C566, C529/C545, and C556/C587. Residues 94 to 131 (VKDHCSKHNPCQKGGTCVNMPDGPRCICADHFTGKHCQ) enclose the EGF-like 1 domain. T109 carries an O-linked (Fuc) threonine glycan. The 41-residue stretch at 133–173 (EKCFEPQFFRFFHENEIWHRLEPAGVVKCQCKGPNAQCKPL) folds into the Fibronectin type-I domain. The region spanning 174 to 210 (ASQVCRTNPCLNGGSCLQAEGHRLCRCAPSFAGRLCD) is the EGF-like 2 domain. The 90-residue stretch at 217-306 (CYDDRDRGLS…SWNYCRLAPC (90 aa)) folds into the Kringle domain. 2 N-linked (GlcNAc...) asparagine glycosylation sites follow: N251 and N282. In terms of domain architecture, Peptidase S1 spans 369–611 (VVGGLVALPG…YLAWIREHTA (243 aa)). The Charge relay system role is filled by H408. The N-linked (GlcNAc...) asparagine glycan is linked to N429. The active-site Charge relay system is the D457. The active-site Charge relay system is the S560.

It belongs to the peptidase S1 family. In terms of assembly, interacts with HRG; the interaction, which is enhanced in the presence of zinc ions and inhibited by heparin-binding, inhibits factor XII autoactivation and contact-initiated coagulation. In terms of processing, O- and N-glycosylated.

The protein resides in the secreted. It carries out the reaction Selective cleavage of Arg-|-Ile bonds in factor VII to form factor VIIa and factor XI to form factor XIa.. Activity is promoted in the presence of negatively charged surfaces. Its function is as follows. Factor XII is a serum glycoprotein that participates in the initiation of blood coagulation, fibrinolysis, and the generation of bradykinin and angiotensin. Prekallikrein is cleaved by factor XII to form kallikrein, which then cleaves factor XII first to alpha-factor XIIa and then to beta-factor XIIa. Alpha-factor XIIa activates factor XI to factor XIa. The polypeptide is Coagulation factor XII (F12) (Bos taurus (Bovine)).